Reading from the N-terminus, the 205-residue chain is Phosphoribosyl-dephospho-CoA transferase (205 aa).

Active-site residues include Asp134 and Asp136.

This sequence belongs to the MdcG family.

The enzyme catalyses apo-[malonate decarboxylase ACP] + 2'-(5''-triphospho-alpha-D-ribosyl)-3'-dephospho-CoA = holo-[malonate decarboxylase ACP] + diphosphate. Functionally, transfers 2'-(5-triphosphoribosyl)-3'-dephosphocoenzyme-A to the apo-[acyl-carrier-protein] of the malonate decarboxylase to yield holo-[acyl-carrier-protein]. The chain is Phosphoribosyl-dephospho-CoA transferase from Klebsiella pneumoniae (strain 342).